Consider the following 401-residue polypeptide: MNEDYILIRFGEISTKGKNRKLFVDRLKRNIKMVLRDFRNVRYESTRDRMTLVLNGEDAEAVMARLKHVFGIQSFSLAVKCRTDLESIKETALASVQEQYKPGDTFKVSTKRAYKQFELNTNEMNAEIGGHILRNTDDLTVDVHSPDIHLRIEIREDATYLTFRDEKGAGGLPVGSGGKAMLMISGGIDSPVAGFYAMKRGLEIEAVHFFSPPYTSERAKQKVIDLTKRLTAFGGDIKLHIVPFTKTQELIQKQIPENYSMTATRRLMLQIADKLRERHNALAIFTGESLGQVASQTLESMYAINAVTSTPVLRPLIGMDKTEIIEKAKEIDTYDISIRPYEDCCTIFTPSAPKTRPKKEKIEHFESYTDFEPLINEAVENTETIVLSSKAETKDQFADFF.

A THUMP domain is found at 60-165 (EAVMARLKHV…EDATYLTFRD (106 aa)). ATP contacts are provided by residues 183–184 (MI), 208–209 (HF), R265, G287, and Q296.

Belongs to the ThiI family.

The protein resides in the cytoplasm. It carries out the reaction [ThiI sulfur-carrier protein]-S-sulfanyl-L-cysteine + a uridine in tRNA + 2 reduced [2Fe-2S]-[ferredoxin] + ATP + H(+) = [ThiI sulfur-carrier protein]-L-cysteine + a 4-thiouridine in tRNA + 2 oxidized [2Fe-2S]-[ferredoxin] + AMP + diphosphate. The enzyme catalyses [ThiS sulfur-carrier protein]-C-terminal Gly-Gly-AMP + S-sulfanyl-L-cysteinyl-[cysteine desulfurase] + AH2 = [ThiS sulfur-carrier protein]-C-terminal-Gly-aminoethanethioate + L-cysteinyl-[cysteine desulfurase] + A + AMP + 2 H(+). It participates in cofactor biosynthesis; thiamine diphosphate biosynthesis. Its function is as follows. Catalyzes the ATP-dependent transfer of a sulfur to tRNA to produce 4-thiouridine in position 8 of tRNAs, which functions as a near-UV photosensor. Also catalyzes the transfer of sulfur to the sulfur carrier protein ThiS, forming ThiS-thiocarboxylate. This is a step in the synthesis of thiazole, in the thiamine biosynthesis pathway. The sulfur is donated as persulfide by IscS. The sequence is that of Probable tRNA sulfurtransferase from Bacillus licheniformis (strain ATCC 14580 / DSM 13 / JCM 2505 / CCUG 7422 / NBRC 12200 / NCIMB 9375 / NCTC 10341 / NRRL NRS-1264 / Gibson 46).